Consider the following 209-residue polypeptide: Orotate phosphoribosyltransferase (209 aa).

5-phospho-alpha-D-ribose 1-diphosphate-binding positions include Arg-96, Lys-100, His-102, and 122–130 (EDLISTGGS). Ser-126 contributes to the orotate binding site.

The protein belongs to the purine/pyrimidine phosphoribosyltransferase family. PyrE subfamily. Homodimer. The cofactor is Mg(2+).

It catalyses the reaction orotidine 5'-phosphate + diphosphate = orotate + 5-phospho-alpha-D-ribose 1-diphosphate. It participates in pyrimidine metabolism; UMP biosynthesis via de novo pathway; UMP from orotate: step 1/2. Its function is as follows. Catalyzes the transfer of a ribosyl phosphate group from 5-phosphoribose 1-diphosphate to orotate, leading to the formation of orotidine monophosphate (OMP). This chain is Orotate phosphoribosyltransferase, found in Streptococcus mutans serotype c (strain ATCC 700610 / UA159).